Here is a 201-residue protein sequence, read N- to C-terminus: Orotate phosphoribosyltransferase (201 aa).

113 to 121 serves as a coordination point for 5-phospho-alpha-D-ribose 1-diphosphate; sequence EDIITTGKS. Threonine 117 and arginine 145 together coordinate orotate.

Belongs to the purine/pyrimidine phosphoribosyltransferase family. PyrE subfamily. Homodimer. Mg(2+) serves as cofactor.

The enzyme catalyses orotidine 5'-phosphate + diphosphate = orotate + 5-phospho-alpha-D-ribose 1-diphosphate. The protein operates within pyrimidine metabolism; UMP biosynthesis via de novo pathway; UMP from orotate: step 1/2. Its function is as follows. Catalyzes the transfer of a ribosyl phosphate group from 5-phosphoribose 1-diphosphate to orotate, leading to the formation of orotidine monophosphate (OMP). This chain is Orotate phosphoribosyltransferase, found in Helicobacter pylori (strain ATCC 700392 / 26695) (Campylobacter pylori).